The chain runs to 387 residues: Ferrochelatase (387 aa).

Residues His196 and Glu277 each contribute to the Fe cation site.

The protein belongs to the ferrochelatase family.

It is found in the cytoplasm. It carries out the reaction heme b + 2 H(+) = protoporphyrin IX + Fe(2+). The protein operates within porphyrin-containing compound metabolism; protoheme biosynthesis; protoheme from protoporphyrin-IX: step 1/1. Functionally, catalyzes the ferrous insertion into protoporphyrin IX. The sequence is that of Ferrochelatase from Cyanothece sp. (strain PCC 7425 / ATCC 29141).